The primary structure comprises 144 residues: Large ribosomal subunit protein uL15 (144 aa).

The disordered stretch occupies residues 1–48 (MQLNNLKPADGSKHAKRRVGRGIGSGLGKTAGRGHKGQKSRSGGFHKV). Over residues 21 to 31 (RGIGSGLGKTA) the composition is skewed to gly residues.

The protein belongs to the universal ribosomal protein uL15 family. Part of the 50S ribosomal subunit.

In terms of biological role, binds to the 23S rRNA. This chain is Large ribosomal subunit protein uL15, found in Cupriavidus metallidurans (strain ATCC 43123 / DSM 2839 / NBRC 102507 / CH34) (Ralstonia metallidurans).